The primary structure comprises 71 residues: Long neurotoxin 5 (71 aa).

Cystine bridges form between cysteine 3/cysteine 20, cysteine 14/cysteine 41, cysteine 26/cysteine 30, cysteine 45/cysteine 56, and cysteine 57/cysteine 62.

Belongs to the three-finger toxin family. Long-chain subfamily. Type II alpha-neurotoxin sub-subfamily. As to expression, expressed by the venom gland.

It localises to the secreted. In terms of biological role, binds with high affinity to muscular (alpha-1/CHRNA1) and neuronal (alpha-7/CHRNA7) nicotinic acetylcholine receptor (nAChR) and inhibits acetylcholine from binding to the receptor, thereby impairing neuromuscular and neuronal transmission. The protein is Long neurotoxin 5 of Naja naja (Indian cobra).